Here is a 613-residue protein sequence, read N- to C-terminus: Putative adenosylhomocysteinase 3 (613 aa).

Composition is skewed to low complexity over residues 1–14 (MSVQ…AAKV) and 35–44 (AAAVGAMVPP). A disordered region spans residues 1–186 (MSVQVVSAAA…KQQKNSKGSS (186 aa)). Ser-2 carries the post-translational modification N-acetylserine. Residues 2 to 111 (SVQVVSAAAA…DGGEALVSPD (110 aa)) are LISN domain, inhibits interaction with ITPR1. Positions 52–68 (APAPAPAAERPPAPGPG) are enriched in pro residues. Over residues 70-80 (GPTAALSPAAG) the composition is skewed to low complexity. Residue Ser-109 is modified to Phosphoserine. Basic residues predominate over residues 137–146 (RPTKIGRRSL). Residues 147–166 (SRSISQSSTDSYSSAASYTD) are compositionally biased toward low complexity. Phosphoserine occurs at positions 151, 154, 157, and 160. Residues Thr-238, Asp-312, and Glu-337 each contribute to the substrate site. 338–340 (SVT) is an NAD(+) binding site. Substrate contacts are provided by Lys-367 and Asp-371. Residues Asn-372, 403 to 408 (GEVGKG), Glu-424, Asn-459, 480 to 482 (MGH), and Asn-527 contribute to the NAD(+) site.

This sequence belongs to the adenosylhomocysteinase family. As to quaternary structure, homotetramer. Forms heteromultimers with AHCYL1 (via the C-terminal region). Interacts with ITPR1; with lower affinity than AHCYL1 and maybe via ITPR1. Interacts with SLC4A4. Interacts with ZCCHC4. The cofactor is NAD(+). In terms of processing, phosphorylated during neuronal differentiation at the LISN domain. As to expression, highly expressed in cerebrum, cerebellum and kidney. Also expressed in thymus, spleen, testis, ovary and, at lower, levels in lung and liver (at protein level). In cerebellum, expressed in interneurons.

Its subcellular location is the cytoplasm. The protein resides in the microsome. It carries out the reaction S-adenosyl-L-homocysteine + H2O = L-homocysteine + adenosine. The protein operates within amino-acid biosynthesis; L-homocysteine biosynthesis; L-homocysteine from S-adenosyl-L-homocysteine: step 1/1. May regulate the electrogenic sodium/bicarbonate cotransporter SLC4A4 activity and Mg(2+)-sensitivity. On the contrary of its homolog AHCYL1, does not regulate ITPR1 sensitivity to inositol 1,4,5-trisphosphate. This chain is Putative adenosylhomocysteinase 3 (Ahcyl2), found in Mus musculus (Mouse).